Consider the following 726-residue polypeptide: MIYQGENLSVDYIENGIAHLVFNAAGSVNKLNIATLRSLGEAIDVLYKQKDLQALLLSSGKSAFIVGADITEFLGLFDTPEEELSDWLHQANVIFSRLEDLPVPTLSAITGFALGGGCECVLATDFRLADDTASIGLPETQLGIMPGWGGSVRLPRLIGADPAMEVITTGKPKRAKDALKIGMVDGIVSRETLIDASVSMLKQAIDGQLNWQQRREQKKAPIQLSPLEAAMSFNVAKGMIMKMAGKHYPAPLTAVKSIEQSANMHRDDALAIENKHFVALTRTDVAKSLVGIFLNDQLVKSKAKQAVKNSEPVKNAAVLGAGIMGGGIAYQSASKGVPVLMKDIAQASLDLGMNEASKLLNKQLERGRLSGLKMAQVLSSITPSLNYGGIETKDVIVEAVVENPTIKAAVLAEVENEVNEHAILASNTSTIPISLLAKSLKRPENFCGMHFFNPVHRMPLVEVIRGEKTSQQTIDRVVAYASQMGKTPIVVNDCPGFFVNRVLFPYFAGFSLLLRDGGNYQQIDKVMEKEFGWPMGPAYLLDVVGIDTAHHAQAVMAQGFPERMAKNGRDVIDAMFEDDRYGQKNGIGFYAYALDKKGKPKKNIDEKTNAIIATITDSTQPYTSEQISARMMIPMINEVIRCLDEGIIASPAEADMALVYGLGFPPFKGGVFRYLDSIGLDTYLDMAKEFEQLSPVYQVPDSIKQKAAAGECYYPAPKSSVSSPSV.

Positions 1–189 are enoyl-CoA hydratase/isomerase; the sequence is MIYQGENLSV…KIGMVDGIVS (189 aa). Asp-296 lines the substrate pocket. The tract at residues 311–726 is 3-hydroxyacyl-CoA dehydrogenase; the sequence is EPVKNAAVLG…PKSSVSSPSV (416 aa). NAD(+) is bound by residues Met-324, Asp-343, 400–402, Lys-407, and Ser-429; that span reads VVE. His-450 (for 3-hydroxyacyl-CoA dehydrogenase activity) is an active-site residue. Asn-453 lines the NAD(+) pocket. Substrate-binding residues include Asn-500 and Tyr-660.

This sequence in the N-terminal section; belongs to the enoyl-CoA hydratase/isomerase family. In the C-terminal section; belongs to the 3-hydroxyacyl-CoA dehydrogenase family. Heterotetramer of two alpha chains (FadB) and two beta chains (FadA).

The enzyme catalyses a (3S)-3-hydroxyacyl-CoA + NAD(+) = a 3-oxoacyl-CoA + NADH + H(+). It catalyses the reaction a (3S)-3-hydroxyacyl-CoA = a (2E)-enoyl-CoA + H2O. It carries out the reaction a 4-saturated-(3S)-3-hydroxyacyl-CoA = a (3E)-enoyl-CoA + H2O. The catalysed reaction is (3S)-3-hydroxybutanoyl-CoA = (3R)-3-hydroxybutanoyl-CoA. The enzyme catalyses a (3Z)-enoyl-CoA = a 4-saturated (2E)-enoyl-CoA. It catalyses the reaction a (3E)-enoyl-CoA = a 4-saturated (2E)-enoyl-CoA. Its pathway is lipid metabolism; fatty acid beta-oxidation. In terms of biological role, involved in the aerobic and anaerobic degradation of long-chain fatty acids via beta-oxidation cycle. Catalyzes the formation of 3-oxoacyl-CoA from enoyl-CoA via L-3-hydroxyacyl-CoA. It can also use D-3-hydroxyacyl-CoA and cis-3-enoyl-CoA as substrate. In Aliivibrio salmonicida (strain LFI1238) (Vibrio salmonicida (strain LFI1238)), this protein is Fatty acid oxidation complex subunit alpha.